A 141-amino-acid chain; its full sequence is Nucleoside diphosphate kinase (141 aa).

Lysine 11, phenylalanine 59, arginine 87, threonine 93, arginine 104, and asparagine 114 together coordinate ATP. Histidine 117 serves as the catalytic Pros-phosphohistidine intermediate.

The protein belongs to the NDK family. In terms of assembly, homotetramer. It depends on Mg(2+) as a cofactor.

The protein resides in the cytoplasm. The catalysed reaction is a 2'-deoxyribonucleoside 5'-diphosphate + ATP = a 2'-deoxyribonucleoside 5'-triphosphate + ADP. The enzyme catalyses a ribonucleoside 5'-diphosphate + ATP = a ribonucleoside 5'-triphosphate + ADP. Major role in the synthesis of nucleoside triphosphates other than ATP. The ATP gamma phosphate is transferred to the NDP beta phosphate via a ping-pong mechanism, using a phosphorylated active-site intermediate. In Acidovorax ebreus (strain TPSY) (Diaphorobacter sp. (strain TPSY)), this protein is Nucleoside diphosphate kinase.